The chain runs to 1497 residues: ABC multidrug transporter C (1497 aa).

Residues Met1–Pro13 are compositionally biased toward polar residues. The segment at Met1 to Gly21 is disordered. Asn137 and Asn336 each carry an N-linked (GlcNAc...) asparagine glycan. The ABC transporter 1 domain occupies Leu158–Glu412. 5 consecutive transmembrane segments (helical) span residues Leu523–Tyr543, Ala557–Leu577, Ala599–Leu621, Gly632–Phe652, and Ala665–Pro685. Asn762 carries an N-linked (GlcNAc...) asparagine glycan. A helical membrane pass occupies residues Gly777–Ile797. The interval Gln815 to Thr843 is disordered. The ABC transporter 2 domain maps to Phe853–Ala1096. Gly889–Thr896 is an ATP binding site. 5 consecutive transmembrane segments (helical) span residues Tyr1192–Phe1212, Phe1226–Phe1246, Ile1273–Tyr1293, Leu1313–Ile1333, and Leu1352–Phe1372. Residue Asn1411 is glycosylated (N-linked (GlcNAc...) asparagine). A helical membrane pass occupies residues Phe1464–Leu1484.

Belongs to the ABC transporter superfamily. ABCG family. PDR (TC 3.A.1.205) subfamily.

The protein localises to the cell membrane. The catalysed reaction is fluconazole(in) + ATP + H2O = fluconazole(out) + ADP + phosphate + H(+). It catalyses the reaction itraconazole(in) + ATP + H2O = itraconazole(out) + ADP + phosphate + H(+). It carries out the reaction voriconazole(in) + ATP + H2O = voriconazole(out) + ADP + phosphate + H(+). Its activity is regulated as follows. The efflux inhibitor FK506 impairs the transport activity. Pleiotropic ABC efflux transporter that shows a strong substrate specificity for the azole class of drugs such as lotrimazole (CLT), fluconazole (FLC), itraconazole (ITC), ketoconazole (KTC), posaconazole (POS), tebuconazole (TEBZ), and voriconazole (VRC). Is also able to transport rhodamine 6G (R-6G), a known substrate for many ABC transporters. Required for normal pathogenesis in a Galleria mellonella (greater wax moth) infection model. This chain is ABC multidrug transporter C, found in Aspergillus fumigatus (strain ATCC MYA-4609 / CBS 101355 / FGSC A1100 / Af293) (Neosartorya fumigata).